The primary structure comprises 209 residues: NADH-quinone oxidoreductase subunit C (209 aa).

Belongs to the complex I 30 kDa subunit family. In terms of assembly, NDH-1 is composed of 14 different subunits. Subunits NuoB, C, D, E, F, and G constitute the peripheral sector of the complex.

It is found in the cell inner membrane. The enzyme catalyses a quinone + NADH + 5 H(+)(in) = a quinol + NAD(+) + 4 H(+)(out). In terms of biological role, NDH-1 shuttles electrons from NADH, via FMN and iron-sulfur (Fe-S) centers, to quinones in the respiratory chain. The immediate electron acceptor for the enzyme in this species is believed to be ubiquinone. Couples the redox reaction to proton translocation (for every two electrons transferred, four hydrogen ions are translocated across the cytoplasmic membrane), and thus conserves the redox energy in a proton gradient. The chain is NADH-quinone oxidoreductase subunit C from Xanthobacter autotrophicus (strain ATCC BAA-1158 / Py2).